A 253-amino-acid polypeptide reads, in one-letter code: uncharacterized protein (253 aa).

An ATP-binding site is contributed by 7–14; that stretch reads GKGGVGKT.

This sequence to M.jannaschii MJ0084 and MJ0823.

This is an uncharacterized protein from Methanocaldococcus jannaschii (strain ATCC 43067 / DSM 2661 / JAL-1 / JCM 10045 / NBRC 100440) (Methanococcus jannaschii).